Consider the following 440-residue polypeptide: MGLGVSAEQPAGGAEGFHLHGVQENSPAQQAGLEPYFDFIITIGHSRLNKENDTLKALLKANVEKPVKLEVFNMKTMRVREVEVVPSNMWGGQGLLGASVRFCSFRRASEQVWHVLDVEPSSPAALAGLRPYTDYVVGSDQILQESEDFFTLIESHEGKPLKLMVYNSKSDSCREVTVTPNAAWGGEGSLGCGIGYGYLHRIPTQPPSYHKKPPGTPPPSALPLGAPPPDALPPGPTPEDSPSLETGSRQSDYMEALLQAPGSSMEDPLPGPGSPSHSAPDPDGLPHFMETPLQPPPPVQRVMDPGFLDVSGISLLDNSNASVWPSLPSSTELTTTAVSTSGPEDICSSSSSHERGGEATWSGSEFEVSFLDSPGAQAQADHLPQLTLPDSLTSAASPEDGLSAELLEAQAEEEPASTEGLDTGTEAEGLDSQAQISTTE.

G2 carries the N-myristoyl glycine lipid modification. PDZ GRASP-type domains are found at residues 15–105 (EGFH…FCSF) and 111–199 (QVWH…YGYL). The GRASP stretch occupies residues 15 to 215 (EGFHLHGVQE…PPSYHKKPPG (201 aa)). Zn(2+)-binding residues include H18, H20, and C103. The segment at 190 to 202 (LGCGIGYGYLHRI) is essential for interaction with GOLGA2/GM130. Disordered regions lie at residues 205 to 248 (QPPS…ETGS), 261 to 301 (PGSS…PVQR), and 327 to 440 (LPSS…STTE). Pro residues predominate over residues 214-239 (PGTPPPSALPLGAPPPDALPPGPTPE). Residue T216 is modified to Phosphothreonine. Over residues 327-336 (LPSSTELTTT) the composition is skewed to low complexity. Residues 337-351 (AVSTSGPEDICSSSS) show a composition bias toward polar residues. Phosphoserine occurs at positions 362, 364, and 373.

This sequence belongs to the GORASP family. In terms of assembly, homodimer. Forms higher-order oligomers under interphase but not mitotic conditions. Dimers of the protein on one membrane might be able to interact with dimers on another and so stack cisternae. Interacts with the C-terminus of GOLGA2/GM130 under both mitotic and non-mitotic conditions. The interaction is critical for the correct targeting of both proteins to the cis-Golgi. Interacts with TMED2 and TMED3. Post-translationally, phosphorylated by CDC2/B1 and PLK kinases during mitosis. Phosphorylation cycle correlates with the cisternal stacking cycle. Phosphorylation of the homodimer prevents the association of dimers into higher-order oligomers, leading to cisternal unstacking. Target for caspase-3 cleavage during apoptosis. The cleavage contributes to Golgi fragmentation and occurs very early in the execution phase of apoptosis. In terms of processing, myristoylated.

The protein localises to the golgi apparatus. It localises to the cis-Golgi network membrane. The protein resides in the endoplasmic reticulum-Golgi intermediate compartment membrane. In terms of biological role, key structural protein of the Golgi apparatus. The membrane cisternae of the Golgi apparatus adhere to each other to form stacks, which are aligned side by side to form the Golgi ribbon. Acting in concert with GORASP2/GRASP55, is required for the formation and maintenance of the Golgi ribbon, and may be dispensable for the formation of stacks. However, other studies suggest that GORASP1 plays an important role in assembly and membrane stacking of the cisternae, and in the reassembly of Golgi stacks after breakdown during mitosis. Caspase-mediated cleavage of GORASP1 is required for fragmentation of the Golgi during apoptosis. Also mediates, via its interaction with GOLGA2/GM130, the docking of transport vesicles with the Golgi membranes. Mediates ER stress-induced unconventional (ER/Golgi-independent) trafficking of core-glycosylated CFTR to cell membrane. The polypeptide is Golgi reassembly-stacking protein 1 (GORASP1) (Homo sapiens (Human)).